We begin with the raw amino-acid sequence, 244 residues long: Centromere protein H (244 aa).

Met-1 is subject to N-acetylmethionine. The disordered stretch occupies residues 1-33 (METQSEEQAVTKPADSGGEGGPPQVAGAQAARP). Ser-16 is modified (phosphoserine). Residues 22–31 (PPQVAGAQAA) show a composition bias toward low complexity. Residue Lys-64 forms a Glycyl lysine isopeptide (Lys-Gly) (interchain with G-Cter in SUMO2) linkage. Thr-65 is modified (phosphothreonine). 2 coiled-coil regions span residues 66–104 (PEQI…DRMQ) and 146–189 (DLEE…MENS).

The protein belongs to the CENP-H/MCM16 family. As to quaternary structure, self-associates. Component of the CENPA-NAC complex, at least composed of CENPA, CENPC, CENPH, CENPM, CENPN, CENPT and CENPU. The CENPA-NAC complex interacts with the CENPA-CAD complex, composed of CENPI, CENPK, CENPL, CENPO, CENPP, CENPQ, CENPR and CENPS. Interacts with KIF2C and NDC80.

Its subcellular location is the nucleus. It localises to the chromosome. The protein resides in the centromere. It is found in the kinetochore. In terms of biological role, component of the CENPA-NAC (nucleosome-associated) complex, a complex that plays a central role in assembly of kinetochore proteins, mitotic progression and chromosome segregation. The CENPA-NAC complex recruits the CENPA-CAD (nucleosome distal) complex and may be involved in incorporation of newly synthesized CENPA into centromeres. The polypeptide is Centromere protein H (CENPH) (Bos taurus (Bovine)).